The following is a 350-amino-acid chain: Probable dual-specificity RNA methyltransferase RlmN (350 aa).

Catalysis depends on E98, which acts as the Proton acceptor. A Radical SAM core domain is found at H104–D334. An intrachain disulfide couples C111 to C339. [4Fe-4S] cluster contacts are provided by C118, C122, and C125. Residues G165–E166, S197, S220–H222, and N296 contribute to the S-adenosyl-L-methionine site. The S-methylcysteine intermediate role is filled by C339.

The protein belongs to the radical SAM superfamily. RlmN family. Requires [4Fe-4S] cluster as cofactor.

The protein resides in the cytoplasm. The enzyme catalyses adenosine(2503) in 23S rRNA + 2 reduced [2Fe-2S]-[ferredoxin] + 2 S-adenosyl-L-methionine = 2-methyladenosine(2503) in 23S rRNA + 5'-deoxyadenosine + L-methionine + 2 oxidized [2Fe-2S]-[ferredoxin] + S-adenosyl-L-homocysteine. The catalysed reaction is adenosine(37) in tRNA + 2 reduced [2Fe-2S]-[ferredoxin] + 2 S-adenosyl-L-methionine = 2-methyladenosine(37) in tRNA + 5'-deoxyadenosine + L-methionine + 2 oxidized [2Fe-2S]-[ferredoxin] + S-adenosyl-L-homocysteine. Its function is as follows. Specifically methylates position 2 of adenine 2503 in 23S rRNA and position 2 of adenine 37 in tRNAs. The chain is Probable dual-specificity RNA methyltransferase RlmN from Desulforamulus reducens (strain ATCC BAA-1160 / DSM 100696 / MI-1) (Desulfotomaculum reducens).